We begin with the raw amino-acid sequence, 1023 residues long: Rho GTPase-activating protein 11A (1023 aa).

The Rho-GAP domain maps to 49-239; it reads VPFNALPHSA…TLIDYASDIG (191 aa). A Phosphoserine modification is found at serine 285. At threonine 306 the chain carries Phosphothreonine. Serine 316 and serine 318 each carry phosphoserine. At threonine 323 the chain carries Phosphothreonine. 3 positions are modified to phosphoserine: serine 339, serine 340, and serine 484. At threonine 508 the chain carries Phosphothreonine. Residues 567-589 form a disordered region; it reads TPSNLNNKHNSNITSSPLSGDEN. 4 positions are modified to phosphoserine: serine 582, serine 585, serine 638, and serine 675. A disordered region spans residues 714 to 734; that stretch reads KQEFSSDEEIKKQQSPKDKLN. The span at 721-734 shows a compositional bias: basic and acidic residues; sequence EEIKKQQSPKDKLN. Phosphoserine is present on serine 847. Threonine 866 carries the post-translational modification Phosphothreonine. Serine 868 is modified (phosphoserine). A disordered region spans residues 999-1023; sequence AWYKGSPKHPIGKTQLLPTSKPVDL.

It localises to the nucleus. In terms of biological role, GTPase activator for the Rho-type GTPases by converting them to an inactive GDP-bound state. The polypeptide is Rho GTPase-activating protein 11A (Homo sapiens (Human)).